Reading from the N-terminus, the 213-residue chain is Thymidylate kinase (213 aa).

9–16 contacts ATP; the sequence is GLEGAGKS.

This sequence belongs to the thymidylate kinase family.

It catalyses the reaction dTMP + ATP = dTDP + ADP. Its function is as follows. Phosphorylation of dTMP to form dTDP in both de novo and salvage pathways of dTTP synthesis. The chain is Thymidylate kinase from Aeromonas hydrophila subsp. hydrophila (strain ATCC 7966 / DSM 30187 / BCRC 13018 / CCUG 14551 / JCM 1027 / KCTC 2358 / NCIMB 9240 / NCTC 8049).